We begin with the raw amino-acid sequence, 279 residues long: Undecaprenyl-diphosphatase (279 aa).

A run of 8 helical transmembrane segments spans residues 1-21 (MVLE…LPIS), 39-59 (GRFF…LYFF), 96-116 (LLLV…VRFV), 128-148 (FTMG…DALF), 155-175 (IFQI…FAII), 201-221 (FSFL…LVAG), 231-251 (YSLI…SALL), and 259-279 (FVLF…VSFF).

It belongs to the UppP family.

The protein localises to the cell membrane. It carries out the reaction di-trans,octa-cis-undecaprenyl diphosphate + H2O = di-trans,octa-cis-undecaprenyl phosphate + phosphate + H(+). Its function is as follows. Catalyzes the dephosphorylation of undecaprenyl diphosphate (UPP). Confers resistance to bacitracin. The polypeptide is Undecaprenyl-diphosphatase (Tropheryma whipplei (strain Twist) (Whipple's bacillus)).